A 594-amino-acid polypeptide reads, in one-letter code: Glutamate decarboxylase 1 (594 aa).

A compositionally biased stretch (low complexity) spans 1–13; the sequence is MASSTPSSSATSS. Residues 1–23 are disordered; the sequence is MASSTPSSSATSSNAGADPNTTN. Ser-78 carries the phosphoserine modification. 190–192 is a 4-aminobutanoate binding site; the sequence is QLS. At Lys-405 the chain carries N6-(pyridoxal phosphate)lysine. Arg-567 is a 4-aminobutanoate binding site.

Belongs to the group II decarboxylase family. In terms of assembly, homodimer. Requires pyridoxal 5'-phosphate as cofactor.

It carries out the reaction L-glutamate + H(+) = 4-aminobutanoate + CO2. Functionally, catalyzes the synthesis of the inhibitory neurotransmitter gamma-aminobutyric acid (GABA) with pyridoxal 5'-phosphate as cofactor. The polypeptide is Glutamate decarboxylase 1 (GAD1) (Pan troglodytes (Chimpanzee)).